The sequence spans 160 residues: Heat shock protein beta-6 (160 aa).

An involved in stabilization of the HSPB1:HSBP6 heterodimer region spans residues 1 to 72 (MEIPVPVQPS…PVAQVPTDPG (72 aa)). S16 bears the Phosphoserine; by PKA mark. The 106-residue stretch at 55–160 (LRAPSVALPV…AQAPPPAAAK (106 aa)) folds into the sHSP domain. Q66 carries the deamidated glutamine modification.

This sequence belongs to the small heat shock protein (HSP20) family. In terms of assembly, homodimer. Small heat shock proteins form high molecular mass oligomers containing variable number of monomers; these oligomers display a very flexible quaternary structure easily exchanging their subunits. Heterooligomer with HSPB1; formed through oligomerization of HSPB1:HSBP6 dimers; subunit exchange leads to formation of at least two different heterooligomeric complexes, differing in variable quantities of HSPB1 and HSPB6 homodimers in addition to HSPB1:HSPB6 heterodimers. Heterooligomer with CRYAB; large heterooligomers consist of CRYAB homodimers and HSPB5:HSPB6 heterodimers but lacking HSPB6 homodimers. Interacts with BAG3. Interacts (phosphorylated) with YWHAZ. Interacts with PDE4A and PDE4D; required for maintenance of the non-phosphorylated state of HSPB6 under basal conditions. Interacts with KDR. Interacts with PRKD1. The N-terminus is blocked. Post-translationally, phosphorylated at Ser-16 by PKA and probably PKD1K; required to protect cardiomyocytes from apoptosis.

It localises to the cytoplasm. The protein localises to the nucleus. It is found in the secreted. Functionally, small heat shock protein which functions as a molecular chaperone probably maintaining denatured proteins in a folding-competent state. Seems to have versatile functions in various biological processes. Plays a role in regulating muscle function such as smooth muscle vasorelaxation and cardiac myocyte contractility. May regulate myocardial angiogenesis implicating KDR. Overexpression mediates cardioprotection and angiogenesis after induced damage. Stabilizes monomeric YWHAZ thereby supporting YWHAZ chaperone-like activity. The chain is Heat shock protein beta-6 (HSPB6) from Homo sapiens (Human).